We begin with the raw amino-acid sequence, 204 residues long: MDRAVLLLSVLSLGVSSQPITEGQRLFSIAVERVHNLHLLAQRLFTEFESSLQTEEQRQLNKIFLQDFCNSDYIISPIDKHETQRSSVLKLLSISYRLIESWEFPSRSLSVGPAARNQISPKLSELKTGILLLIGANQDGAEMFPDSSTLQLAPYGNYYQSLGADESLRRTYELLACFKKDMHKVETYLTVAKCRLSPEANCTL.

The signal sequence occupies residues 1–17; the sequence is MDRAVLLLSVLSLGVSS. Gln-18 is modified (pyrrolidone carboxylic acid). A Zn(2+)-binding site is contributed by His-35. Cys-69 and Cys-177 are joined by a disulfide. Residue Glu-186 coordinates Zn(2+). Cysteines 194 and 202 form a disulfide.

Belongs to the somatotropin/prolactin family.

The protein localises to the secreted. Its function is as follows. Growth hormone plays an important role in growth control and is involved in the regulation of several anabolic processes. Implicated as an osmoregulatory substance important for seawater adaptation. This Morone saxatilis (Striped bass) protein is Somatotropin (gh).